Here is a 1058-residue protein sequence, read N- to C-terminus: Carbamoyl phosphate synthase large chain (1058 aa).

Residues 1–401 (MPKRTDIQKI…SLLKACRSLE (401 aa)) are carboxyphosphate synthetic domain. 12 residues coordinate ATP: Arg-129, Arg-169, Gly-175, Gly-176, Arg-208, Ile-210, Glu-215, Gly-241, Ile-242, His-243, Gln-284, and Glu-298. Residues 133-327 (KQLMEELEQP…IAKLAAKIAV (195 aa)) enclose the ATP-grasp 1 domain. The Mg(2+) site is built by Gln-284, Glu-298, and Asn-300. Residues Gln-284, Glu-298, and Asn-300 each contribute to the Mn(2+) site. The oligomerization domain stretch occupies residues 402-546 (IGVHHNEIPE…YSTYGWENES (145 aa)). Residues 547–929 (IRSDKESVLV…ALYKAFEASY (383 aa)) form a carbamoyl phosphate synthetic domain region. The region spanning 671–861 (EQALKELDIP…MAQVATKLIL (191 aa)) is the ATP-grasp 2 domain. Positions 707, 746, 748, 752, 777, 778, 779, 780, 820, and 832 each coordinate ATP. Positions 820, 832, and 834 each coordinate Mg(2+). Mn(2+)-binding residues include Gln-820, Glu-832, and Asn-834. In terms of domain architecture, MGS-like spans 930-1058 (LHLPTFGNVV…ESRSFVTEAI (129 aa)). Positions 930 to 1058 (LHLPTFGNVV…ESRSFVTEAI (129 aa)) are allosteric domain.

It belongs to the CarB family. In terms of assembly, composed of two chains; the small (or glutamine) chain promotes the hydrolysis of glutamine to ammonia, which is used by the large (or ammonia) chain to synthesize carbamoyl phosphate. Tetramer of heterodimers (alpha,beta)4. The cofactor is Mg(2+). Mn(2+) serves as cofactor.

The catalysed reaction is hydrogencarbonate + L-glutamine + 2 ATP + H2O = carbamoyl phosphate + L-glutamate + 2 ADP + phosphate + 2 H(+). It carries out the reaction hydrogencarbonate + NH4(+) + 2 ATP = carbamoyl phosphate + 2 ADP + phosphate + 2 H(+). Its pathway is amino-acid biosynthesis; L-arginine biosynthesis; carbamoyl phosphate from bicarbonate: step 1/1. The protein operates within pyrimidine metabolism; UMP biosynthesis via de novo pathway; (S)-dihydroorotate from bicarbonate: step 1/3. In terms of biological role, large subunit of the glutamine-dependent carbamoyl phosphate synthetase (CPSase). CPSase catalyzes the formation of carbamoyl phosphate from the ammonia moiety of glutamine, carbonate, and phosphate donated by ATP, constituting the first step of 2 biosynthetic pathways, one leading to arginine and/or urea and the other to pyrimidine nucleotides. The large subunit (synthetase) binds the substrates ammonia (free or transferred from glutamine from the small subunit), hydrogencarbonate and ATP and carries out an ATP-coupled ligase reaction, activating hydrogencarbonate by forming carboxy phosphate which reacts with ammonia to form carbamoyl phosphate. The polypeptide is Carbamoyl phosphate synthase large chain (Streptococcus pneumoniae serotype 2 (strain D39 / NCTC 7466)).